A 288-amino-acid polypeptide reads, in one-letter code: 4-diphosphocytidyl-2-C-methyl-D-erythritol kinase (288 aa).

Lys8 is an active-site residue. Residue 92 to 102 (PVAAGMAGGST) participates in ATP binding. The active site involves Asp134.

Belongs to the GHMP kinase family. IspE subfamily.

It catalyses the reaction 4-CDP-2-C-methyl-D-erythritol + ATP = 4-CDP-2-C-methyl-D-erythritol 2-phosphate + ADP + H(+). It functions in the pathway isoprenoid biosynthesis; isopentenyl diphosphate biosynthesis via DXP pathway; isopentenyl diphosphate from 1-deoxy-D-xylulose 5-phosphate: step 3/6. In terms of biological role, catalyzes the phosphorylation of the position 2 hydroxy group of 4-diphosphocytidyl-2C-methyl-D-erythritol. This Clostridium perfringens (strain ATCC 13124 / DSM 756 / JCM 1290 / NCIMB 6125 / NCTC 8237 / Type A) protein is 4-diphosphocytidyl-2-C-methyl-D-erythritol kinase.